A 452-amino-acid chain; its full sequence is Glycine receptor subunit alpha-2 (452 aa).

Residues 1–27 form the signal peptide; the sequence is MNRQLVNILTALFAFFLETNHFRTAFC. The Extracellular portion of the chain corresponds to 28 to 256; it reads KDHDSRSGKQ…KFHLERQMGY (229 aa). An N-linked (GlcNAc...) asparagine glycan is attached at N72. R99 lines the glycine pocket. Residue R99 coordinates strychnine. N-linked (GlcNAc...) asparagine glycosylation is present at N103. S163 contributes to the glycine binding site. An intrachain disulfide couples C172 to C186. Residues E226 and E228 each contribute to the Zn(2+) site. Cysteines 232 and 243 form a disulfide. T238 is a binding site for glycine. H249 contributes to the Zn(2+) binding site. Residues 257 to 278 traverse the membrane as a helical segment; it reads YLIQMYIPSLLIVILSWVSFWI. Residues 279-283 are Cytoplasmic-facing; sequence NMDAA. A helical transmembrane segment spans residues 284 to 304; sequence PARVALGITTVLTMTTQSSGS. The Extracellular portion of the chain corresponds to 305–315; it reads RASLPKVSYVK. A helical membrane pass occupies residues 316 to 336; it reads AIDIWMAVCLLFVFAALLEYA. The Cytoplasmic portion of the chain corresponds to 337–420; sequence AVNFVSRQHK…FVDRAKRIDT (84 aa). The helical transmembrane segment at 421–441 threads the bilayer; the sequence is ISRAAFPLAFLIFNIFYWITY. Residues 442–452 lie on the Extracellular side of the membrane; it reads KIIRHEDVHKK.

It belongs to the ligand-gated ion channel (TC 1.A.9) family. Glycine receptor (TC 1.A.9.3) subfamily. GLRA2 sub-subfamily. As to quaternary structure, interacts with GLRB. Heteropentamer composed of GLRA2 and GLRB. Functional GLRB-GLRA2 heteropentamers contain four GLRA2 subunits and one GLRB subunit, although alternative subunit composition cannot be excluded. Homopentamer (in vitro). Both homopentamers and heteropentamers form functional ion channels, but their characteristics are subtly different.

The protein localises to the postsynaptic cell membrane. The protein resides in the synapse. It localises to the cell membrane. Its subcellular location is the cell projection. It catalyses the reaction chloride(in) = chloride(out). Its activity is regulated as follows. Channel opening is triggered by extracellular glycine. Channel opening is also triggered by taurine and beta-alanine. Inhibited by strychnine. Inhibited by picrotoxin. Channel activity is potentiated by 10-100 uM Zn(2+). Channel activity is marginally increased by 50 mM ethanol; it is strongly increased by a combination of 0.5 uM Zn(2+) and 50 mM ethanol. Channel activity is inhibited by 100-1000 uM Zn(2+). Its function is as follows. Subunit of heteromeric glycine-gated chloride channels. Plays a role in synaptic plasticity. Contributes to the generation of inhibitory postsynaptic currents, and is involved in the down-regulation of neuronal excitability. Plays a role in cellular responses to ethanol. In Homo sapiens (Human), this protein is Glycine receptor subunit alpha-2.